The primary structure comprises 2079 residues: von Willebrand factor A domain-containing protein DDB_G0286969 (2079 aa).

The VIT domain occupies 11 to 147; that stretch reads EQILPSFISI…ELEIIITYST (137 aa). The tract at residues 178–203 is disordered; it reads NENSTTNTNTQTQPQSVNTTTTTTPS. Over residues 180 to 203 the composition is skewed to low complexity; the sequence is NSTTNTNTQTQPQSVNTTTTTTPS. One can recognise a VWFA domain in the interval 354 to 525; the sequence is ELIFLVDVSE…KVMRQLKRAL (172 aa). Disordered stretches follow at residues 761-800, 832-866, 956-1139, 1155-1203, and 1239-1294; these read PTTL…LKTP, PFVP…TEVK, AKPV…TKPT, NEPA…VSST, and DSNT…ADAE. Composition is skewed to low complexity over residues 785 to 800, 841 to 866, and 956 to 973; these read TTQQ…LKTP, PTTT…TEVK, and AKPV…QQTK. The stretch at 923-957 forms a coiled coil; it reads EMIKIAEAKAAAEQKAAAEQKAIADAKAAAEQAAK. The segment covering 974 to 989 has biased composition (basic and acidic residues); the sequence is PKADKQSKQNAKDNKQ. Over residues 992–1006 the composition is skewed to low complexity; it reads KPVVVEQKPPVVTET. Polar residues predominate over residues 1007–1021; that stretch reads KPTVATESATPTKPT. Positions 1023–1061 are enriched in low complexity; it reads AQAAAAAAAAAQQAAQQAAATTPVKQQPTKQTTPNKSTP. The span at 1092–1111 shows a compositional bias: basic and acidic residues; sequence KPVETKPVEQTKPVETKPVE. Low complexity predominate over residues 1176–1198; it reads NNNNNNNNNNNNNNNNNNNNNNN. Over residues 1239–1272 the composition is skewed to polar residues; sequence DSNTKAPDSLKTTPIFSNGPQGISPSSGNGSNKS. Basic and acidic residues predominate over residues 1280–1292; sequence DRGGRGGRDRNAD. The MIF4G domain occupies 1317 to 1527; it reads LKKFKFNLNR…LDLIDLRANK (211 aa). Positions 1530-1755 are disordered; sequence PKNSTQTKTK…PAPVEPVKPK (226 aa). Basic and acidic residues-rich tracts occupy residues 1538 to 1550, 1557 to 1599, and 1621 to 1634; these read TKKD…ERFI, QKRE…RDAP, and NNRD…DRSG. Composition is skewed to low complexity over residues 1635–1659 and 1688–1699; these read GKQS…LFGS and SSSIPSIPNRSN. Residues 1725-1740 show a composition bias toward basic and acidic residues; it reads SNDRDSRGPSKPDNRK. The region spanning 1760–1882 is the MI domain; sequence KIEDDISMTL…PLNYLEEAYA (123 aa).

The protein is von Willebrand factor A domain-containing protein DDB_G0286969 of Dictyostelium discoideum (Social amoeba).